We begin with the raw amino-acid sequence, 360 residues long: Squamosa promoter-binding-like protein 7 (360 aa).

Residues 74-89 (AQGSGGGGGGGGGGSA) show a composition bias toward gly residues. The interval 74 to 98 (AQGSGGGGGGGGGGSADQGKRKEKA) is disordered. The SBP-type zinc-finger motif lies at 105–182 (VPRCQVEGCD…AGHNERRRRS (78 aa)). Residues C108, C113, C130, H133, C149, C152, H156, and C168 each coordinate Zn(2+). The short motif at 165-181 (KKSCRRRLAGHNERRRR) is the Bipartite nuclear localization signal element. A compositionally biased stretch (basic residues) spans 172-182 (LAGHNERRRRS). 3 disordered regions span residues 172-196 (LAGH…AHPH), 261-306 (FFSD…HEHQ), and 320-360 (AAGG…ARVV).

Expressed in young panicles.

It is found in the nucleus. Its function is as follows. Trans-acting factor that binds specifically to the consensus nucleotide sequence 5'-TNCGTACAA-3'. May be involved in panicle development. This chain is Squamosa promoter-binding-like protein 7 (SPL7), found in Oryza sativa subsp. indica (Rice).